A 326-amino-acid polypeptide reads, in one-letter code: MSSLSGHASTIQPSCLGFCGRTVLVGNYSEDVEATTTAAGSTSLSRCGPCSFGYRNNAMSICESCDTPLQPYDWMYLLFIALLPLLLHMQFIRIARKYCRTRYYEVSEYLCVILENVIACVIAVLIYPPRFTFFLNGCSKTDIKEWYPACYNPRIGYTKTMRCTYEVVFPLYSITFIHHLILIGSILVLRSTLYCVLLYKTYNGKPFYAAIVSVPILAVIHAVLSGVVFYTFPYILLIGSLWAMCFHLALEGKRPLKEMIVRIATSPTHLIFLSITMLMLSFGVIAIIAPLDIPYRWSFLCIVPVPFIFYMATIPFSNPTTTMRLS.

Over 1–71 (MSSLSGHAST…CESCDTPLQP (71 aa)) the chain is Lumenal. Asn27 is a glycosylation site (N-linked (GlcNAc...) asparagine). The chain crosses the membrane as a helical span at residues 72–92 (YDWMYLLFIALLPLLLHMQFI). The Cytoplasmic segment spans residues 93 to 108 (RIARKYCRTRYYEVSE). The helical transmembrane segment at 109-129 (YLCVILENVIACVIAVLIYPP) threads the bilayer. Topologically, residues 130-166 (RFTFFLNGCSKTDIKEWYPACYNPRIGYTKTMRCTYE) are lumenal. Residues 167 to 187 (VVFPLYSITFIHHLILIGSIL) form a helical membrane-spanning segment. At 188-208 (VLRSTLYCVLLYKTYNGKPFY) the chain is on the cytoplasmic side. Transmembrane regions (helical) follow at residues 209–229 (AAIV…GVVF) and 230–250 (YTFP…HLAL). Residues 251-269 (EGKRPLKEMIVRIATSPTH) are Cytoplasmic-facing. A helical membrane pass occupies residues 270–290 (LIFLSITMLMLSFGVIAIIAP). The Lumenal segment spans residues 291–296 (LDIPYR). Residues 297 to 317 (WSFLCIVPVPFIFYMATIPFS) form a helical membrane-spanning segment. At 318–326 (NPTTTMRLS) the chain is on the cytoplasmic side.

The protein resides in the endoplasmic reticulum membrane. Facilitates degradation of misfolded endoplasmic reticulum (ER) proteins through the recruitment of components of the proteasome and endoplasmic reticulum-associated degradation (ERAD) system. Involved in ER stress response. In Caenorhabditis elegans, this protein is JNK1/MAPK8-associated membrane protein homolog.